The following is a 716-amino-acid chain: DNA ligase (716 aa).

NAD(+)-binding positions include 42 to 46 (DAEYD), 91 to 92 (SL), and Glu-125. Lys-127 (N6-AMP-lysine intermediate) is an active-site residue. NAD(+) is bound by residues Arg-148, Glu-184, Lys-300, and Lys-324. Zn(2+) is bound by residues Cys-429, Cys-432, Cys-447, and Cys-453. The BRCT domain maps to 638–716 (TASSPIAGKI…EEAWLQLIEG (79 aa)).

This sequence belongs to the NAD-dependent DNA ligase family. LigA subfamily. The cofactor is Mg(2+). Mn(2+) is required as a cofactor.

It carries out the reaction NAD(+) + (deoxyribonucleotide)n-3'-hydroxyl + 5'-phospho-(deoxyribonucleotide)m = (deoxyribonucleotide)n+m + AMP + beta-nicotinamide D-nucleotide.. Its function is as follows. DNA ligase that catalyzes the formation of phosphodiester linkages between 5'-phosphoryl and 3'-hydroxyl groups in double-stranded DNA using NAD as a coenzyme and as the energy source for the reaction. It is essential for DNA replication and repair of damaged DNA. The protein is DNA ligase of Bartonella henselae (strain ATCC 49882 / DSM 28221 / CCUG 30454 / Houston 1) (Rochalimaea henselae).